The sequence spans 292 residues: Selenate reductase subunit B (292 aa).

Residues 1–43 constitute a signal peptide (tat-type signal); that stretch reads MGSKETKNTSRRDFLIKGAGAAALGAGAFAISQVPLLEKLASA. 4Fe-4S ferredoxin-type domains follow at residues 84 to 113, 129 to 160, and 161 to 190; these read WIMV…PPGV, VTKK…KSED, and GIVA…FDWG. Residues cysteine 93, cysteine 96, cysteine 99, cysteine 103, cysteine 138, cysteine 141, cysteine 146, cysteine 150, cysteine 170, cysteine 173, cysteine 176, cysteine 180, cysteine 230, cysteine 233, cysteine 245, and cysteine 249 each contribute to the [4Fe-4S] cluster site.

In terms of assembly, the complex is composed of three subunits: SrdA, SrdB and SrdC. Requires [4Fe-4S] cluster as cofactor. Predicted to be exported by the Tat system. The position of the signal peptide cleavage has not been experimentally proven.

It is found in the secreted. It carries out the reaction selenite + a quinone + H2O = selenate + a quinol. In terms of biological role, component of the respiratory selenate reductase complex, which catalyzes the reduction of selenate to selenite. This subunit probably transfers electrons from SrdC to SrdA. The polypeptide is Selenate reductase subunit B (Mesobacillus selenatarsenatis (strain DSM 18680 / JCM 14380 / FERM P-15431 / SF-1)).